The following is a 427-amino-acid chain: Inward rectifier potassium channel 2 (427 aa).

At 1–81 the chain is on the cytoplasmic side; that stretch reads MGSVRTNRYS…IFTTCVDIRW (81 aa). Cysteine 76 is subject to S-nitrosocysteine. The chain crosses the membrane as a helical span at residues 82 to 106; the sequence is RWMLVIFCLAFVLSWLFFGCVFWLI. The Extracellular portion of the chain corresponds to 107-128; that stretch reads ALLHGDLDASKEGKACVSEVNS. The helical; Pore-forming intramembrane region spans 129 to 140; sequence FTAAFLFSIETQ. The pore-forming intramembrane region spans 141–147; it reads TTIGYGF. Positions 142 to 147 match the Selectivity filter motif; sequence TIGYGF. The Extracellular segment spans residues 148–156; that stretch reads RCVTDECPI. A helical membrane pass occupies residues 157 to 178; that stretch reads AVFMVVFQSIVGCIIDAFIIGA. Topologically, residues 179 to 427 are cytoplasmic; it reads VMAKMAKPKK…PRPLRRESEI (249 aa). A polyphosphoinositide (PIP2)-binding region spans residues 181-208; sequence AKMAKPKKRNETLVFSHNAVIAMRDGKL. The interval 384–427 is disordered; sequence SKEEDDSENGVPESTSTDTPPDIDLHNQASVPLEPRPLRRESEI. A PDZ-binding motif is present at residues 425-427; the sequence is SEI.

Belongs to the inward rectifier-type potassium channel (TC 1.A.2.1) family. KCNJ2 subfamily. In terms of assembly, homotetramer. Homomultimeric and heteromultimeric association with KCNJ4/Kir2.3. Can form heteromeric channels with Kir2.6/KCNJ18. Associates, via its PDZ-recognition domain, with a complex containing LIN7A, LIN7B, LIN7C, DLG1, CASK and APBA1. Post-translationally, S-nitrosylation increases the open probability and inward rectifying currents.

Its subcellular location is the cell membrane. It localises to the sarcolemma. It is found in the T-tubule. The enzyme catalyses K(+)(in) = K(+)(out). Activated by phosphatidylinositol 4,5 biphosphate (PtdIns(4,5)P2). Its function is as follows. Inward rectifier potassium channels are characterized by a greater tendency to allow potassium to flow into the cell rather than out of it. Their voltage dependence is regulated by the concentration of extracellular potassium; as external potassium is raised, the voltage range of the channel opening shifts to more positive voltages. The inward rectification is mainly due to the blockage of outward current by internal magnesium. Can be blocked by extracellular barium or cesium. Probably participates in establishing action potential waveform and excitability of neuronal and muscle tissues. In Macaca mulatta (Rhesus macaque), this protein is Inward rectifier potassium channel 2 (KCNJ2).